Here is a 333-residue protein sequence, read N- to C-terminus: GTP 3',8-cyclase (333 aa).

Positions K7–E221 constitute a Radical SAM core domain. R16 contributes to the GTP binding site. 2 residues coordinate [4Fe-4S] cluster: C23 and C27. S-adenosyl-L-methionine is bound at residue Y29. A [4Fe-4S] cluster-binding site is contributed by C30. R66 contributes to the GTP binding site. G70 is a binding site for S-adenosyl-L-methionine. Position 97 (T97) interacts with GTP. S121 contributes to the S-adenosyl-L-methionine binding site. K158 serves as a coordination point for GTP. M192 is a binding site for S-adenosyl-L-methionine. [4Fe-4S] cluster contacts are provided by C257 and C260. R262–R264 is a binding site for GTP. Residue C274 coordinates [4Fe-4S] cluster.

It belongs to the radical SAM superfamily. MoaA family. Monomer and homodimer. The cofactor is [4Fe-4S] cluster.

The catalysed reaction is GTP + AH2 + S-adenosyl-L-methionine = (8S)-3',8-cyclo-7,8-dihydroguanosine 5'-triphosphate + 5'-deoxyadenosine + L-methionine + A + H(+). The protein operates within cofactor biosynthesis; molybdopterin biosynthesis. Catalyzes the cyclization of GTP to (8S)-3',8-cyclo-7,8-dihydroguanosine 5'-triphosphate. The chain is GTP 3',8-cyclase from Listeria monocytogenes serotype 4b (strain CLIP80459).